The chain runs to 519 residues: Membrane-bound transcription factor site-2 protease (519 aa).

At Met1–Pro3 the chain is on the cytoplasmic side. Residues Val4–Leu24 traverse the membrane as a helical segment. Over Lys25–Gln74 the chain is Lumenal. Transmembrane regions (helical) follow at residues Trp75–Gly95 and Lys96–Ala107. Residues Asp108 to Gln144 lie on the Lumenal side of the membrane. The segment at Ser115–Ser135 is disordered. A helical membrane pass occupies residues Val145 to Val169. Position 171 (His171) interacts with Zn(2+). Residue Glu172 is part of the active site. Transmembrane regions (helical) follow at residues Gly174–Phe186, Asn187–Leu209, and Phe229–Tyr251. His175 is a Zn(2+) binding site. The Lumenal segment spans residues Thr252–Lys446. Asn337 carries an N-linked (GlcNAc...) asparagine glycan. 2 helical membrane passes run Tyr447 to Phe464 and Ala465 to Leu476. Over Asp477–Leu492 the chain is Lumenal. The chain crosses the membrane as a helical span at residues Ile493–Leu513. At Trp514–Arg519 the chain is on the cytoplasmic side.

The protein belongs to the peptidase M50A family. Requires Zn(2+) as cofactor. Expressed in heart, brain, placenta, lung, liver, muscle, kidney and pancreas.

It localises to the membrane. The protein resides in the cytoplasm. The protein localises to the golgi apparatus membrane. It carries out the reaction Cleaves several transcription factors that are type-2 transmembrane proteins within membrane-spanning domains. Known substrates include sterol regulatory element-binding protein (SREBP) -1, SREBP-2 and forms of the transcriptional activator ATF6. SREBP-2 is cleaved at the site 477-DRSRILL-|-CVLTFLCLSFNPLTSLLQWGGA-505. The residues Asn-Pro, 11 residues distal to the site of cleavage in the membrane-spanning domain, are important for cleavage by S2P endopeptidase. Replacement of either of these residues does not prevent cleavage, but there is no cleavage if both of these residues are replaced.. Functionally, zinc metalloprotease that mediates intramembrane proteolysis of proteins such as ATF6, ATF6B, SREBF1/SREBP1 and SREBF2/SREBP2. Catalyzes the second step in the proteolytic activation of the sterol regulatory element-binding proteins (SREBPs) SREBF1/SREBP1 and SREBF2/SREBP2: cleaves SREBPs within the first transmembrane segment, thereby releasing the N-terminal segment with a portion of the transmembrane segment attached. Mature N-terminal SREBP fragments shuttle to the nucleus and activate gene transcription. Also mediates the second step in the proteolytic activation of the cyclic AMP-dependent transcription factor ATF-6 (ATF6 and ATF6B). Involved in intramembrane proteolysis during bone formation. In astrocytes and osteoblasts, upon DNA damage and ER stress, mediates the second step of the regulated intramembrane proteolytic activation of the transcription factor CREB3L1, leading to the inhibition of cell-cycle progression. This chain is Membrane-bound transcription factor site-2 protease, found in Homo sapiens (Human).